We begin with the raw amino-acid sequence, 125 residues long: Large ribosomal subunit protein mL51 (125 aa).

The N-terminal 29 residues, Met1–Leu29, are a transit peptide targeting the mitochondrion.

The protein belongs to the mitochondrion-specific ribosomal protein mL51 family. As to quaternary structure, component of the mitochondrial ribosome large subunit (39S) which comprises a 16S rRNA and about 50 distinct proteins.

It localises to the mitochondrion. This Xenopus tropicalis (Western clawed frog) protein is Large ribosomal subunit protein mL51 (mrpl51).